Here is a 428-residue protein sequence, read N- to C-terminus: Serine hydroxymethyltransferase (428 aa).

Gly-120–Ile-122 provides a ligand contact to (6S)-5,6,7,8-tetrahydrofolate. At Lys-226 the chain carries N6-(pyridoxal phosphate)lysine.

This sequence belongs to the SHMT family. In terms of assembly, homodimer. The cofactor is pyridoxal 5'-phosphate.

The protein localises to the cytoplasm. It catalyses the reaction 5,10-methylenetetrahydromethanopterin + glycine + H2O = 5,6,7,8-tetrahydromethanopterin + L-serine. The protein operates within amino-acid biosynthesis; glycine biosynthesis; glycine from L-serine: step 1/1. Functionally, catalyzes the reversible interconversion of serine and glycine with tetrahydromethanopterin (H4MPT) serving as the one-carbon carrier. Also exhibits a pteridine-independent aldolase activity toward beta-hydroxyamino acids, producing glycine and aldehydes, via a retro-aldol mechanism. The protein is Serine hydroxymethyltransferase of Methanopyrus kandleri (strain AV19 / DSM 6324 / JCM 9639 / NBRC 100938).